Consider the following 49-residue polypeptide: Large ribosomal subunit protein bL33B (49 aa).

This sequence belongs to the bacterial ribosomal protein bL33 family.

This chain is Large ribosomal subunit protein bL33B, found in Bacillus cytotoxicus (strain DSM 22905 / CIP 110041 / 391-98 / NVH 391-98).